The chain runs to 351 residues: UDP-N-acetylglucosamine--N-acetylmuramyl-(pentapeptide) pyrophosphoryl-undecaprenol N-acetylglucosamine transferase (351 aa).

Residues 12–14 (TGG), Asn124, Arg160, Ser188, Ile239, 258–263 (ALTVCE), and Gln283 contribute to the UDP-N-acetyl-alpha-D-glucosamine site.

The protein belongs to the glycosyltransferase 28 family. MurG subfamily.

The protein localises to the cell inner membrane. It catalyses the reaction di-trans,octa-cis-undecaprenyl diphospho-N-acetyl-alpha-D-muramoyl-L-alanyl-D-glutamyl-meso-2,6-diaminopimeloyl-D-alanyl-D-alanine + UDP-N-acetyl-alpha-D-glucosamine = di-trans,octa-cis-undecaprenyl diphospho-[N-acetyl-alpha-D-glucosaminyl-(1-&gt;4)]-N-acetyl-alpha-D-muramoyl-L-alanyl-D-glutamyl-meso-2,6-diaminopimeloyl-D-alanyl-D-alanine + UDP + H(+). It participates in cell wall biogenesis; peptidoglycan biosynthesis. Its function is as follows. Cell wall formation. Catalyzes the transfer of a GlcNAc subunit on undecaprenyl-pyrophosphoryl-MurNAc-pentapeptide (lipid intermediate I) to form undecaprenyl-pyrophosphoryl-MurNAc-(pentapeptide)GlcNAc (lipid intermediate II). The chain is UDP-N-acetylglucosamine--N-acetylmuramyl-(pentapeptide) pyrophosphoryl-undecaprenol N-acetylglucosamine transferase from Glaesserella parasuis serovar 5 (strain SH0165) (Haemophilus parasuis).